Reading from the N-terminus, the 351-residue chain is D-alanine--D-alanine ligase (351 aa).

The ATP-grasp domain occupies 135-344; the sequence is KMAFAQAGLP…FAELVDQLIQ (210 aa). 171-226 lines the ATP pocket; that stretch reads EQRLGYPCFVKPANLGSSVGIAKVRSRSELEKALDSAASYDRRIVIETGVKAREVE. Residues Asp297, Glu311, and Asn313 each contribute to the Mg(2+) site.

It belongs to the D-alanine--D-alanine ligase family. The cofactor is Mg(2+). Requires Mn(2+) as cofactor.

It is found in the cytoplasm. The enzyme catalyses 2 D-alanine + ATP = D-alanyl-D-alanine + ADP + phosphate + H(+). Its pathway is cell wall biogenesis; peptidoglycan biosynthesis. Its function is as follows. Cell wall formation. The polypeptide is D-alanine--D-alanine ligase (Rippkaea orientalis (strain PCC 8801 / RF-1) (Cyanothece sp. (strain PCC 8801))).